Consider the following 526-residue polypeptide: Tyrosine-protein kinase transforming protein Src (526 aa).

Residues 1 to 52 (MGSSKSKPKDPSQRRHSLEPPDSTHHGGFPASQTPDETAAPDAHRNPSRSFG) form a disordered region. Glycine 2 carries N-myristoyl glycine; by host lipidation. The span at 7–25 (KPKDPSQRRHSLEPPDSTH) shows a compositional bias: basic and acidic residues. 2 SH3 domains span residues 71 to 139 (TSPQ…YVAP) and 81 to 142 (GGVT…PSDS). Residues 148–245 (WYFGKITRRE…GLCHRLANVC (98 aa)) form the SH2 domain. The 251-residue stretch at 267–517 (LRLEAKLGQG…TFKYLQAQLL (251 aa)) folds into the Protein kinase domain. ATP-binding positions include 273-281 (LGQGCFGEV) and lysine 295. Catalysis depends on aspartate 386, which acts as the Proton acceptor. Tyrosine 416 bears the Phosphotyrosine; by autocatalysis mark.

It belongs to the protein kinase superfamily. Tyr protein kinase family. SRC subfamily. As to quaternary structure, homodimer. Post-translationally, the phosphorylated form is termed pp60v-src.

It carries out the reaction L-tyrosyl-[protein] + ATP = O-phospho-L-tyrosyl-[protein] + ADP + H(+). In terms of biological role, this phosphoprotein, required for both the initiation and the maintenance of neoplastic transformation, is a protein kinase that catalyzes the phosphorylation of tyrosine residues in vitro. The polypeptide is Tyrosine-protein kinase transforming protein Src (V-SRC) (Gallus gallus (Chicken)).